The primary structure comprises 138 residues: Large ribosomal subunit protein bL19 (138 aa).

This sequence belongs to the bacterial ribosomal protein bL19 family.

Functionally, this protein is located at the 30S-50S ribosomal subunit interface and may play a role in the structure and function of the aminoacyl-tRNA binding site. The chain is Large ribosomal subunit protein bL19 from Rickettsia conorii (strain ATCC VR-613 / Malish 7).